A 229-amino-acid chain; its full sequence is Deleted in azoospermia-like (229 aa).

The RRM domain occupies Asn47–Arg128. The DAZ domain maps to Pro172–Gln198.

Belongs to the RRM DAZ family. Testis and ovary specific. In ovary, it is localized in the cortex of oocytes. At the onset of embryogenesis, maternal product is located at the vegetal pole, before migrating toward blastomeres through cytoplasmic streams as early embryogenesis proceededs.

It is found in the cytoplasm. RNA-binding protein involved in gametogenesis in both males and females. Acts by binding to the 3'-UTR of mRNA, specifically recognizing GUU triplets, and promoting the translation of key transcripts. Establishes oocyte polarity through interaction with Bucky ball (BUC). Interacts with Bucky ball (BUC) mRNA to mediate Balbiani body formation and oocyte polarity during early oogenesis. The sequence is that of Deleted in azoospermia-like (dazl) from Danio rerio (Zebrafish).